Reading from the N-terminus, the 467-residue chain is Chromosomal replication initiator protein DnaA (467 aa).

A domain I, interacts with DnaA modulators region spans residues 1–85 (MTTTLWPQVL…LEVGEYAIES (85 aa)). The domain II stretch occupies residues 85–130 (SFNEPENTSVPQPLRETKAEREAAEKAASSTSKKKSDSPPKKTIKH). The disordered stretch occupies residues 87–129 (NEPENTSVPQPLRETKAEREAAEKAASSTSKKKSDSPPKKTIK). Positions 99 to 109 (RETKAEREAAE) are enriched in basic and acidic residues. The interval 131 to 347 (NLNTNFTFDT…GALKRVGAFA (217 aa)) is domain III, AAA+ region. ATP-binding residues include G175, G177, K178, and T179. Residues 348–467 (QFTQQLVTVD…FNSLIRIITN (120 aa)) form a domain IV, binds dsDNA region.

This sequence belongs to the DnaA family. As to quaternary structure, oligomerizes as a right-handed, spiral filament on DNA at oriC.

The protein localises to the cytoplasm. Its function is as follows. Plays an essential role in the initiation and regulation of chromosomal replication. ATP-DnaA binds to the origin of replication (oriC) to initiate formation of the DNA replication initiation complex once per cell cycle. Binds the DnaA box (a 9 base pair repeat at the origin) and separates the double-stranded (ds)DNA. Forms a right-handed helical filament on oriC DNA; dsDNA binds to the exterior of the filament while single-stranded (ss)DNA is stabiized in the filament's interior. The ATP-DnaA-oriC complex binds and stabilizes one strand of the AT-rich DNA unwinding element (DUE), permitting loading of DNA polymerase. After initiation quickly degrades to an ADP-DnaA complex that is not apt for DNA replication. Binds acidic phospholipids. The sequence is that of Chromosomal replication initiator protein DnaA from Hydrogenovibrio crunogenus (strain DSM 25203 / XCL-2) (Thiomicrospira crunogena).